We begin with the raw amino-acid sequence, 687 residues long: Variant-specific surface protein VSP4A1 (687 aa).

The signal sequence occupies residues 1–14 (MLLTAFYVVLGSFA). The Extracellular segment spans residues 15-660 (APCQQDGDHI…SGLSTGAIAG (646 aa)). Residues 661–681 (ISVAAIVVVGGLVGFLCWWFI) traverse the membrane as a helical segment. Residues 682–687 (CRGKAQ) lie on the Cytoplasmic side of the membrane.

The protein belongs to the Giardia variant surface protein family. In terms of processing, O-glycosylated. The major glycan is a trisaccharide with Glc at the reducing terminus. Palmitoylated.

It localises to the cell membrane. The chain is Variant-specific surface protein VSP4A1 from Giardia intestinalis (Giardia lamblia).